The sequence spans 289 residues: Diaminopimelate epimerase (289 aa).

Substrate-binding residues include asparagine 13, glutamine 47, and asparagine 67. Cysteine 76 (proton donor) is an active-site residue. Substrate is bound by residues 77–78, asparagine 167, asparagine 200, and 218–219; these read GN and ER. Catalysis depends on cysteine 227, which acts as the Proton acceptor. 228–229 is a substrate binding site; it reads GT.

The protein belongs to the diaminopimelate epimerase family. As to quaternary structure, homodimer.

Its subcellular location is the cytoplasm. The catalysed reaction is (2S,6S)-2,6-diaminopimelate = meso-2,6-diaminopimelate. Its pathway is amino-acid biosynthesis; L-lysine biosynthesis via DAP pathway; DL-2,6-diaminopimelate from LL-2,6-diaminopimelate: step 1/1. Catalyzes the stereoinversion of LL-2,6-diaminopimelate (L,L-DAP) to meso-diaminopimelate (meso-DAP), a precursor of L-lysine and an essential component of the bacterial peptidoglycan. This Burkholderia mallei (strain NCTC 10247) protein is Diaminopimelate epimerase.